Consider the following 707-residue polypeptide: Polyribonucleotide nucleotidyltransferase (707 aa).

Residues aspartate 486 and aspartate 492 each contribute to the Mg(2+) site. The region spanning proline 553 to isoleucine 612 is the KH domain. Positions glycine 622–lysine 690 constitute an S1 motif domain.

This sequence belongs to the polyribonucleotide nucleotidyltransferase family. The cofactor is Mg(2+).

It localises to the cytoplasm. The catalysed reaction is RNA(n+1) + phosphate = RNA(n) + a ribonucleoside 5'-diphosphate. Its function is as follows. Involved in mRNA degradation. Catalyzes the phosphorolysis of single-stranded polyribonucleotides processively in the 3'- to 5'-direction. In Sulfurihydrogenibium azorense (strain DSM 15241 / OCM 825 / Az-Fu1), this protein is Polyribonucleotide nucleotidyltransferase.